We begin with the raw amino-acid sequence, 452 residues long: Low-affinity putrescine importer PlaP (452 aa).

Residues 1 to 16 (MSHNVTPNTSRVELRK) are Cytoplasmic-facing. The helical transmembrane segment at 17–37 (TLTLVPVVMMGLAYMQPMTLF) threads the bilayer. Over 38 to 48 (DTFGIVSGLTD) the chain is Periplasmic. A helical membrane pass occupies residues 49–69 (GHVPTAYAFALIAILFTALSY). Residues 70 to 95 (GKLVRRYPSAGSAYTYAQKSISPTVG) are Cytoplasmic-facing. The helical transmembrane segment at 96 to 116 (FMVGWSSLLDYLFAPMINILL) threads the bilayer. The Periplasmic segment spans residues 117–123 (AKIYFEA). A helical membrane pass occupies residues 124–144 (LVPSIPSWMFVVALVAFMTAF). At 145–158 (NLRSLKSVANFNTV) the chain is on the cytoplasmic side. The chain crosses the membrane as a helical span at residues 159-179 (IVVLQVVLIAVILGMVVYGVF). The Periplasmic segment spans residues 180–199 (EGEGAGTLASTRPFWSGDAH). The chain crosses the membrane as a helical span at residues 200–220 (VIPMITGATILCFSFTGFDGI). Over 221 to 237 (SNLSEETKDAERVIPRA) the chain is Cytoplasmic. A helical membrane pass occupies residues 238-258 (IFLTALIGGMIFIFATYFLQL). Over 259–283 (YFPDISRFKDPDASQPEIMLYVAGK) the chain is Periplasmic. A helical transmembrane segment spans residues 284 to 304 (AFQVGALIFSTITVLASGMAA). The Cytoplasmic segment spans residues 305-339 (HAGVARLMYVMGRDGVFPKSFFGYVHPKWRTPAMN). The next 2 membrane-spanning stretches (helical) occupy residues 340–360 (IILVGAIALLAINFDLVMATA) and 361–381 (LINFGALVAFTFVNLSVISQF). At 382–394 (WIREKRNKTLKDH) the chain is on the cytoplasmic side. The chain crosses the membrane as a helical span at residues 395-415 (FQYLFLPMCGALTVGALWVNL). The Periplasmic portion of the chain corresponds to 416 to 417 (EE). Residues 418–438 (SSMVLGLIWAAIGLIYLACVT) form a helical membrane-spanning segment. The Cytoplasmic portion of the chain corresponds to 439 to 452 (KSFRNPVPQYEDVA).

It belongs to the amino acid-polyamine-organocation (APC) superfamily.

The protein resides in the cell inner membrane. The enzyme catalyses putrescine(in) + H(+)(in) = putrescine(out) + H(+)(out). Putrescine importer. The sequence is that of Low-affinity putrescine importer PlaP (plaP) from Escherichia coli O157:H7.